The following is a 734-amino-acid chain: Elongation factor G, mitochondrial (734 aa).

The transit peptide at 1-32 (MTSFLTSRFGGLALRNVMNNKNGINSFGLRCF) directs the protein to the mitochondrion. Residues 38-318 (SGLRNIGISA…GVIKYLPSPN (281 aa)) form the tr-type G domain. GTP contacts are provided by residues 47–54 (AHIDSGKT), 114–118 (DTPGH), and 168–171 (NKLD).

This sequence belongs to the TRAFAC class translation factor GTPase superfamily. Classic translation factor GTPase family. EF-G/EF-2 subfamily.

It localises to the mitochondrion. The enzyme catalyses GTP + H2O = GDP + phosphate + H(+). It participates in protein biosynthesis; polypeptide chain elongation. Mitochondrial GTPase that catalyzes the GTP-dependent ribosomal translocation step during translation elongation. During this step, the ribosome changes from the pre-translocational (PRE) to the post-translocational (POST) state as the newly formed A-site-bound peptidyl-tRNA and P-site-bound deacylated tRNA move to the P and E sites, respectively. Catalyzes the coordinated movement of the two tRNA molecules, the mRNA and conformational changes in the ribosome. In Dictyostelium discoideum (Social amoeba), this protein is Elongation factor G, mitochondrial (gfm1).